The chain runs to 248 residues: Proteasome subunit alpha type-7 (248 aa).

The O-linked (GlcNAc) serine glycan is linked to Ser-130. Tyr-153 carries the phosphotyrosine modification.

This sequence belongs to the peptidase T1A family. In terms of assembly, the 26S proteasome consists of a 20S proteasome core and two 19S regulatory subunits. The 20S proteasome core is a barrel-shaped complex made of 28 subunits that are arranged in four stacked rings. The two outer rings are each formed by seven alpha subunits, and the two inner rings are formed by seven beta subunits. The proteolytic activity is exerted by three beta-subunits PSMB5, PSMB6 and PSMB7. PSMA7 interacts directly with the PSMG1-PSMG2 heterodimer which promotes 20S proteasome assembly. Interacts with HIF1A. Interacts with RAB7A. Interacts with PRKN. Interacts with ABL1 and ABL2. Interacts with EMAP2. Interacts with MAVS.

Its subcellular location is the cytoplasm. It is found in the nucleus. Component of the 20S core proteasome complex involved in the proteolytic degradation of most intracellular proteins. This complex plays numerous essential roles within the cell by associating with different regulatory particles. Associated with two 19S regulatory particles, forms the 26S proteasome and thus participates in the ATP-dependent degradation of ubiquitinated proteins. The 26S proteasome plays a key role in the maintenance of protein homeostasis by removing misfolded or damaged proteins that could impair cellular functions, and by removing proteins whose functions are no longer required. Associated with the PA200 or PA28, the 20S proteasome mediates ubiquitin-independent protein degradation. This type of proteolysis is required in several pathways including spermatogenesis (20S-PA200 complex) or generation of a subset of MHC class I-presented antigenic peptides (20S-PA28 complex). Inhibits the transactivation function of HIF-1A under both normoxic and hypoxia-mimicking conditions. The interaction with EMAP2 increases the proteasome-mediated HIF-1A degradation under the hypoxic conditions. Plays a role in hepatitis C virus internal ribosome entry site-mediated translation. Mediates nuclear translocation of the androgen receptor (AR) and thereby enhances androgen-mediated transactivation. Promotes MAVS degradation and thereby negatively regulates MAVS-mediated innate immune response. The chain is Proteasome subunit alpha type-7 (PSMA7) from Pongo abelii (Sumatran orangutan).